We begin with the raw amino-acid sequence, 249 residues long: Chitooligosaccharide deacetylase (249 aa).

Residues His-61 and His-125 each coordinate Mg(2+).

Belongs to the YdjC deacetylase family. ChbG subfamily. In terms of assembly, homodimer. The cofactor is Mg(2+).

It localises to the cytoplasm. The catalysed reaction is N,N'-diacetylchitobiose + H2O = N-acetyl-beta-D-glucosaminyl-(1-&gt;4)-D-glucosamine + acetate. It catalyses the reaction diacetylchitobiose-6'-phosphate + H2O = N'-monoacetylchitobiose-6'-phosphate + acetate. It functions in the pathway glycan degradation; chitin degradation. Its function is as follows. Involved in the degradation of chitin. ChbG is essential for growth on the acetylated chitooligosaccharides chitobiose and chitotriose but is dispensable for growth on cellobiose and chitosan dimer, the deacetylated form of chitobiose. Deacetylation of chitobiose-6-P and chitotriose-6-P is necessary for both the activation of the chb promoter by the regulatory protein ChbR and the hydrolysis of phosphorylated beta-glucosides by the phospho-beta-glucosidase ChbF. Catalyzes the removal of only one acetyl group from chitobiose-6-P to yield monoacetylchitobiose-6-P, the inducer of ChbR and the substrate of ChbF. The sequence is that of Chitooligosaccharide deacetylase from Escherichia coli O17:K52:H18 (strain UMN026 / ExPEC).